Reading from the N-terminus, the 502-residue chain is ATP synthase subunit alpha (502 aa).

A disordered region spans residues 117-139 (GMGPVLTSKTRPIESPAPGVMDR). 169–176 (GDRQTGKT) is an ATP binding site.

It belongs to the ATPase alpha/beta chains family. In terms of assembly, F-type ATPases have 2 components, CF(1) - the catalytic core - and CF(0) - the membrane proton channel. CF(1) has five subunits: alpha(3), beta(3), gamma(1), delta(1), epsilon(1). CF(0) has three main subunits: a(1), b(2) and c(9-12). The alpha and beta chains form an alternating ring which encloses part of the gamma chain. CF(1) is attached to CF(0) by a central stalk formed by the gamma and epsilon chains, while a peripheral stalk is formed by the delta and b chains.

The protein localises to the cell membrane. The enzyme catalyses ATP + H2O + 4 H(+)(in) = ADP + phosphate + 5 H(+)(out). In terms of biological role, produces ATP from ADP in the presence of a proton gradient across the membrane. The alpha chain is a regulatory subunit. This Bacillus licheniformis (strain ATCC 14580 / DSM 13 / JCM 2505 / CCUG 7422 / NBRC 12200 / NCIMB 9375 / NCTC 10341 / NRRL NRS-1264 / Gibson 46) protein is ATP synthase subunit alpha.